We begin with the raw amino-acid sequence, 60 residues long: Large ribosomal subunit protein uL30 (60 aa).

Belongs to the universal ribosomal protein uL30 family. Part of the 50S ribosomal subunit.

The polypeptide is Large ribosomal subunit protein uL30 (Leptothrix cholodnii (strain ATCC 51168 / LMG 8142 / SP-6) (Leptothrix discophora (strain SP-6))).